The sequence spans 876 residues: Alanine--tRNA ligase (876 aa).

Lys-74 is modified (N6-acetyllysine). His-564, His-568, Cys-666, and His-670 together coordinate Zn(2+).

Belongs to the class-II aminoacyl-tRNA synthetase family. In terms of assembly, homotetramer. It depends on Zn(2+) as a cofactor.

Its subcellular location is the cytoplasm. It catalyses the reaction tRNA(Ala) + L-alanine + ATP = L-alanyl-tRNA(Ala) + AMP + diphosphate. Functionally, catalyzes the attachment of alanine to tRNA(Ala) in a two-step reaction: alanine is first activated by ATP to form Ala-AMP and then transferred to the acceptor end of tRNA(Ala). Also edits incorrectly charged Ser-tRNA(Ala) and Gly-tRNA(Ala) via its editing domain. In Shigella boydii serotype 18 (strain CDC 3083-94 / BS512), this protein is Alanine--tRNA ligase.